The chain runs to 142 residues: Ribonuclease VapC44 (142 aa).

The PINc domain occupies 4 to 126 (LLDVNVLLAL…GRFVTFDQSI (123 aa)). Mg(2+) contacts are provided by D6 and D105.

Belongs to the PINc/VapC protein family. Requires Mg(2+) as cofactor.

Its function is as follows. Toxic component of a type II toxin-antitoxin (TA) system. An RNase. Its cognate antitoxin is VapB44. This chain is Ribonuclease VapC44, found in Mycobacterium tuberculosis (strain CDC 1551 / Oshkosh).